Here is a 337-residue protein sequence, read N- to C-terminus: Large ribosomal subunit protein uL3 (337 aa).

The tract at residues 1-26 (MTRHHQPRKGSVAFSPRKRVARETPR) is disordered.

It belongs to the universal ribosomal protein uL3 family. In terms of assembly, part of the 50S ribosomal subunit. Forms a cluster with proteins L14 and L24e.

Its function is as follows. One of the primary rRNA binding proteins, it binds directly near the 3'-end of the 23S rRNA, where it nucleates assembly of the 50S subunit. This Methanosphaera stadtmanae (strain ATCC 43021 / DSM 3091 / JCM 11832 / MCB-3) protein is Large ribosomal subunit protein uL3.